Reading from the N-terminus, the 331-residue chain is Ketol-acid reductoisomerase (NADP(+)) (331 aa).

Positions 2–182 (AQLFYDSDAD…GGTRAGILET (181 aa)) constitute a KARI N-terminal Rossmann domain. NADP(+) contacts are provided by residues 25-28 (YGSQ), Ser-51, Ser-53, and 83-86 (DEFQ). Residue His-108 is part of the active site. Gly-134 contributes to the NADP(+) binding site. A KARI C-terminal knotted domain is found at 183-328 (NFKEETETDL…KGLRSMFSWL (146 aa)). 4 residues coordinate Mg(2+): Asp-191, Glu-195, Glu-227, and Glu-231. Ser-252 lines the substrate pocket.

The protein belongs to the ketol-acid reductoisomerase family. Mg(2+) serves as cofactor.

The catalysed reaction is (2R)-2,3-dihydroxy-3-methylbutanoate + NADP(+) = (2S)-2-acetolactate + NADPH + H(+). The enzyme catalyses (2R,3R)-2,3-dihydroxy-3-methylpentanoate + NADP(+) = (S)-2-ethyl-2-hydroxy-3-oxobutanoate + NADPH + H(+). The protein operates within amino-acid biosynthesis; L-isoleucine biosynthesis; L-isoleucine from 2-oxobutanoate: step 2/4. It participates in amino-acid biosynthesis; L-valine biosynthesis; L-valine from pyruvate: step 2/4. In terms of biological role, involved in the biosynthesis of branched-chain amino acids (BCAA). Catalyzes an alkyl-migration followed by a ketol-acid reduction of (S)-2-acetolactate (S2AL) to yield (R)-2,3-dihydroxy-isovalerate. In the isomerase reaction, S2AL is rearranged via a Mg-dependent methyl migration to produce 3-hydroxy-3-methyl-2-ketobutyrate (HMKB). In the reductase reaction, this 2-ketoacid undergoes a metal-dependent reduction by NADPH to yield (R)-2,3-dihydroxy-isovalerate. This Synechococcus sp. (strain CC9605) protein is Ketol-acid reductoisomerase (NADP(+)).